The chain runs to 423 residues: Carboxypeptidase B2 (423 aa).

The N-terminal stretch at 1–22 (MKLYSLGVLVATVLFCGEHAFA) is a signal peptide. Positions 23–114 (FQRGQVLSAL…QTSNDTISPR (92 aa)) are cleaved as a propeptide — activation peptide. Asn-44, Asn-73, Asn-85, and Asn-108 each carry an N-linked (GlcNAc...) asparagine glycan. The Peptidase M14 domain occupies 122–419 (QYHSLNEIYS…VAVAKIASHV (298 aa)). Cys-178 and Cys-191 are joined by a disulfide. 2 residues coordinate Zn(2+): His-181 and Glu-184. Substrate-binding positions include 181–184 (HARE) and Arg-239. N-linked (GlcNAc...) asparagine glycosylation occurs at Asn-241. Cystine bridges form between Cys-250/Cys-274 and Cys-265/Cys-279. Substrate is bound at residue 256-257 (NR). His-310 provides a ligand contact to Zn(2+). Substrate-binding positions include 311 to 312 (SY) and Tyr-363. The Proton donor/acceptor role is filled by Glu-385.

The protein belongs to the peptidase M14 family. The cofactor is Zn(2+).

It localises to the secreted. It catalyses the reaction Release of C-terminal Arg and Lys from a polypeptide.. Its activity is regulated as follows. TAFI/CPB2 is unique among carboxypeptidases in that it spontaneously inactivates with a short half-life, a property that is crucial for its role in controlling blood clot lysis. The zymogen is stabilized by interactions with the activation peptide. Release of the activation peptide increases a dynamic flap mobility and in time this leads to conformational changes that disrupt the catalytic site and expose a cryptic thrombin-cleavage site present at Arg-324. Its function is as follows. Cleaves C-terminal arginine or lysine residues from biologically active peptides such as kinins or anaphylatoxins in the circulation thereby regulating their activities. Down-regulates fibrinolysis by removing C-terminal lysine residues from fibrin that has already been partially degraded by plasmin. In Bos taurus (Bovine), this protein is Carboxypeptidase B2 (CPB2).